Consider the following 348-residue polypeptide: Holliday junction branch migration complex subunit RuvB (348 aa).

Residues 4 to 184 (ADRLIAASGR…FGIVQRLEFY (181 aa)) form a large ATPase domain (RuvB-L) region. ATP contacts are provided by residues Ile-23, Arg-24, Gly-65, Lys-68, Thr-69, Thr-70, 131–133 (EDF), Arg-174, Tyr-184, and Arg-221. Thr-69 lines the Mg(2+) pocket. Residues 185-255 (NDKDLSTIVS…VADMALNLLD (71 aa)) form a small ATPAse domain (RuvB-S) region. The segment at 258–348 (ERGFDHSDRR…GGDFSGPGDE (91 aa)) is head domain (RuvB-H). Positions 294, 313, and 318 each coordinate DNA.

This sequence belongs to the RuvB family. As to quaternary structure, homohexamer. Forms an RuvA(8)-RuvB(12)-Holliday junction (HJ) complex. HJ DNA is sandwiched between 2 RuvA tetramers; dsDNA enters through RuvA and exits via RuvB. An RuvB hexamer assembles on each DNA strand where it exits the tetramer. Each RuvB hexamer is contacted by two RuvA subunits (via domain III) on 2 adjacent RuvB subunits; this complex drives branch migration. In the full resolvosome a probable DNA-RuvA(4)-RuvB(12)-RuvC(2) complex forms which resolves the HJ.

The protein localises to the cytoplasm. It catalyses the reaction ATP + H2O = ADP + phosphate + H(+). Its function is as follows. The RuvA-RuvB-RuvC complex processes Holliday junction (HJ) DNA during genetic recombination and DNA repair, while the RuvA-RuvB complex plays an important role in the rescue of blocked DNA replication forks via replication fork reversal (RFR). RuvA specifically binds to HJ cruciform DNA, conferring on it an open structure. The RuvB hexamer acts as an ATP-dependent pump, pulling dsDNA into and through the RuvAB complex. RuvB forms 2 homohexamers on either side of HJ DNA bound by 1 or 2 RuvA tetramers; 4 subunits per hexamer contact DNA at a time. Coordinated motions by a converter formed by DNA-disengaged RuvB subunits stimulates ATP hydrolysis and nucleotide exchange. Immobilization of the converter enables RuvB to convert the ATP-contained energy into a lever motion, pulling 2 nucleotides of DNA out of the RuvA tetramer per ATP hydrolyzed, thus driving DNA branch migration. The RuvB motors rotate together with the DNA substrate, which together with the progressing nucleotide cycle form the mechanistic basis for DNA recombination by continuous HJ branch migration. Branch migration allows RuvC to scan DNA until it finds its consensus sequence, where it cleaves and resolves cruciform DNA. The sequence is that of Holliday junction branch migration complex subunit RuvB from Pseudomonas putida (strain ATCC 700007 / DSM 6899 / JCM 31910 / BCRC 17059 / LMG 24140 / F1).